The chain runs to 154 residues: Putative glutamine amidotransferase-like protein RP712 (154 aa).

The Glutamine amidotransferase type-1 domain occupies methionine 1–lysine 94.

The sequence is that of Putative glutamine amidotransferase-like protein RP712 from Rickettsia prowazekii (strain Madrid E).